Consider the following 88-residue polypeptide: ATP synthase F(0) complex subunit f, mitochondrial (88 aa).

N-acetylalanine is present on Ala-2. The residue at position 3 (Ser-3) is a Phosphoserine. The residue at position 16 (Lys-16) is an N6-acetyllysine. A helical transmembrane segment spans residues 62 to 79 (MVLAAYVVFSYCISYKEL).

It belongs to the ATPase F chain family. In terms of assembly, component of the ATP synthase complex composed at least of ATP5F1A/subunit alpha, ATP5F1B/subunit beta, ATP5MC1/subunit c (homooctomer), MT-ATP6/subunit a, MT-ATP8/subunit 8, ATP5ME/subunit e, ATP5MF/subunit f, ATP5MG/subunit g, ATP5MK/subunit k, ATP5MJ/subunit j, ATP5F1C/subunit gamma, ATP5F1D/subunit delta, ATP5F1E/subunit epsilon, ATP5PF/subunit F6, ATP5PB/subunit b, ATP5PD/subunit d, ATP5PO/subunit OSCP. ATP synthase complex consists of a soluble F(1) head domain (subunits alpha(3) and beta(3)) - the catalytic core - and a membrane F(0) domain - the membrane proton channel (subunits c, a, 8, e, f, g, k and j). These two domains are linked by a central stalk (subunits gamma, delta, and epsilon) rotating inside the F1 region and a stationary peripheral stalk (subunits F6, b, d, and OSCP).

The protein resides in the mitochondrion. It is found in the mitochondrion inner membrane. In terms of biological role, subunit f, of the mitochondrial membrane ATP synthase complex (F(1)F(0) ATP synthase or Complex V) that produces ATP from ADP in the presence of a proton gradient across the membrane which is generated by electron transport complexes of the respiratory chain. ATP synthase complex consist of a soluble F(1) head domain - the catalytic core - and a membrane F(1) domain - the membrane proton channel. These two domains are linked by a central stalk rotating inside the F(1) region and a stationary peripheral stalk. During catalysis, ATP synthesis in the catalytic domain of F(1) is coupled via a rotary mechanism of the central stalk subunits to proton translocation. In vivo, can only synthesize ATP although its ATP hydrolase activity can be activated artificially in vitro. Part of the complex F(0) domain. In Mus musculus (Mouse), this protein is ATP synthase F(0) complex subunit f, mitochondrial.